The following is a 95-amino-acid chain: Basic phospholipase A2 (95 aa).

2 N6-palmitoyl lysine lipidation sites follow: lysine 7 and lysine 10. Residues tyrosine 23, glycine 25, and glycine 27 each contribute to the Ca(2+) site. 5 disulfide bridges follow: cysteine 24/cysteine 40, cysteine 39/cysteine 77, cysteine 46/cysteine 70, cysteine 53/cysteine 63, and cysteine 57/cysteine 68. Histidine 43 is an active-site residue. Aspartate 44 contributes to the Ca(2+) binding site. Aspartate 71 is an active-site residue.

As to quaternary structure, monomer. Requires Ca(2+) as cofactor. In terms of tissue distribution, expressed by the venom gland.

The protein localises to the secreted. The enzyme catalyses a 1,2-diacyl-sn-glycero-3-phosphocholine + H2O = a 1-acyl-sn-glycero-3-phosphocholine + a fatty acid + H(+). PLA2 catalyzes the calcium-dependent hydrolysis of the 2-acyl groups in 3-sn-phosphoglycerides. Induces local and systemic myotoxicity in an intramuscular mouse model. Induces local edema in a mouse footpad assay. Does not exhibit any anticoagulant effects. Does not mediate an antibacterial effect against Gram-negative and Gram-positive bacteria. This Agkistrodon piscivorus leucostoma (Western cottonmouth) protein is Basic phospholipase A2.